The primary structure comprises 639 residues: Collagen alpha-1(XII) chain (639 aa).

The VWFA domain occupies 1–114 (CRKSLLQAVA…DSLSKIVDDL (114 aa)). Fibronectin type-III domains lie at 130–219 (APSN…LPVP), 220–310 (IVSL…LPLP), 311–401 (RPQD…VPAP), 402–490 (TNLR…SPKS), 491–585 (GPRN…TVRN), and 586–639 (LRVY…LRNL). Residues 473 to 496 (DESESDDLTGSERTSPKSGPRNLQ) form a disordered region.

This sequence belongs to the fibril-associated collagens with interrupted helices (FACIT) family. Trimer of identical chains each containing 190 kDa of non-triple-helical sequences. In terms of processing, the triple-helical tail is stabilized by disulfide bonds at each end. Post-translationally, prolines at the third position of the tripeptide repeating unit (G-X-Y) are hydroxylated in some or all of the chains. O-glycosylated; glycosaminoglycan of chondroitin-sulfate type.

The protein localises to the secreted. It localises to the extracellular space. The protein resides in the extracellular matrix. Functionally, type XII collagen interacts with type I collagen-containing fibrils, the COL1 domain could be associated with the surface of the fibrils, and the COL2 and NC3 domains may be localized in the perifibrillar matrix. This is Collagen alpha-1(XII) chain (COL12A1) from Oryctolagus cuniculus (Rabbit).